Reading from the N-terminus, the 50-residue chain is Insulin (50 aa).

Disulfide bonds link cysteine 7/cysteine 36, cysteine 19/cysteine 49, and cysteine 35/cysteine 40.

Belongs to the insulin family. In terms of assembly, heterodimer of a B chain and an A chain linked by two disulfide bonds.

It localises to the secreted. Its function is as follows. Insulin decreases blood glucose concentration. It increases cell permeability to monosaccharides, amino acids and fatty acids. It accelerates glycolysis, the pentose phosphate cycle, and glycogen synthesis in liver. The sequence is that of Insulin (ins) from Oncorhynchus gorbuscha (Pink salmon).